The chain runs to 236 residues: Orotidine 5'-phosphate decarboxylase (236 aa).

Residues Asp-16, Lys-38, 65-74 (DLKLHDIGNT), Thr-123, Arg-184, Gln-193, Gly-213, and Arg-214 each bind substrate. The active-site Proton donor is Lys-67.

The protein belongs to the OMP decarboxylase family. Type 1 subfamily. In terms of assembly, homodimer.

It catalyses the reaction orotidine 5'-phosphate + H(+) = UMP + CO2. It functions in the pathway pyrimidine metabolism; UMP biosynthesis via de novo pathway; UMP from orotate: step 2/2. In terms of biological role, catalyzes the decarboxylation of orotidine 5'-monophosphate (OMP) to uridine 5'-monophosphate (UMP). In Methylobacterium sp. (strain 4-46), this protein is Orotidine 5'-phosphate decarboxylase.